A 124-amino-acid polypeptide reads, in one-letter code: ATP synthase epsilon chain (124 aa).

Residues 97–124 (ARVREASSEEEKSRAESELRAVKRSKEK) form a disordered region.

It belongs to the ATPase epsilon chain family. F-type ATPases have 2 components, CF(1) - the catalytic core - and CF(0) - the membrane proton channel. CF(1) has five subunits: alpha(3), beta(3), gamma(1), delta(1), epsilon(1). CF(0) has three main subunits: a, b and c.

The protein localises to the cell membrane. Produces ATP from ADP in the presence of a proton gradient across the membrane. The protein is ATP synthase epsilon chain of Corynebacterium urealyticum (strain ATCC 43042 / DSM 7109).